The following is a 378-amino-acid chain: Succinyl-diaminopimelate desuccinylase (378 aa).

Position 68 (H68) interacts with Zn(2+). D70 is a catalytic residue. Residue D101 participates in Zn(2+) binding. E135 acts as the Proton acceptor in catalysis. Zn(2+) contacts are provided by E136, E164, and H350.

This sequence belongs to the peptidase M20A family. DapE subfamily. As to quaternary structure, homodimer. It depends on Zn(2+) as a cofactor. Co(2+) serves as cofactor.

It carries out the reaction N-succinyl-(2S,6S)-2,6-diaminopimelate + H2O = (2S,6S)-2,6-diaminopimelate + succinate. It functions in the pathway amino-acid biosynthesis; L-lysine biosynthesis via DAP pathway; LL-2,6-diaminopimelate from (S)-tetrahydrodipicolinate (succinylase route): step 3/3. Its function is as follows. Catalyzes the hydrolysis of N-succinyl-L,L-diaminopimelic acid (SDAP), forming succinate and LL-2,6-diaminopimelate (DAP), an intermediate involved in the bacterial biosynthesis of lysine and meso-diaminopimelic acid, an essential component of bacterial cell walls. The sequence is that of Succinyl-diaminopimelate desuccinylase from Vibrio atlanticus (strain LGP32) (Vibrio splendidus (strain Mel32)).